The following is a 261-amino-acid chain: Thiamine thiazole synthase (261 aa).

Residues Ser40, 59-60 (ER), Gly67, Val133, and 159-161 (HVD) each bind NAD(+). Asp161 and His176 together coordinate Fe cation. Residues Ser179 and Met226 each coordinate NAD(+). Arg236 serves as a coordination point for glycine.

Belongs to the THI4 family. As to quaternary structure, homooctamer; tetramer of dimers. Fe(2+) is required as a cofactor.

It carries out the reaction hydrogen sulfide + glycine + NAD(+) = ADP-5-ethyl-4-methylthiazole-2-carboxylate + nicotinamide + 3 H2O + H(+). It participates in cofactor biosynthesis; thiamine diphosphate biosynthesis. Functionally, involved in the biosynthesis of the thiazole moiety of thiamine. Catalyzes the conversion of NAD and glycine to adenosine diphosphate 5-(2-hydroxyethyl)-4-methylthiazole-2-carboxylate (ADT), an adenylated thiazole intermediate, using free sulfide as a source of sulfur. This is Thiamine thiazole synthase from Methanococcus vannielii (strain ATCC 35089 / DSM 1224 / JCM 13029 / OCM 148 / SB).